Consider the following 269-residue polypeptide: uncharacterized protein (269 aa).

The protein belongs to the methyltransferase superfamily.

This is an uncharacterized protein from Mycobacterium leprae (strain Br4923).